Reading from the N-terminus, the 223-residue chain is Small ribosomal subunit protein uS3 (223 aa).

One can recognise a KH type-2 domain in the interval 39–107; that stretch reads IRQFLRKKPS…EVWLEIAEIK (69 aa).

It belongs to the universal ribosomal protein uS3 family. Part of the 30S ribosomal subunit. Forms a tight complex with proteins S10 and S14.

Functionally, binds the lower part of the 30S subunit head. Binds mRNA in the 70S ribosome, positioning it for translation. The polypeptide is Small ribosomal subunit protein uS3 (Chlamydia pneumoniae (Chlamydophila pneumoniae)).